The sequence spans 186 residues: Peptidyl-tRNA hydrolase (186 aa).

Position 14 (Y14) interacts with tRNA. H19 (proton acceptor) is an active-site residue. TRNA is bound by residues F64, N66, and N112.

Belongs to the PTH family. As to quaternary structure, monomer.

It localises to the cytoplasm. It catalyses the reaction an N-acyl-L-alpha-aminoacyl-tRNA + H2O = an N-acyl-L-amino acid + a tRNA + H(+). Functionally, hydrolyzes ribosome-free peptidyl-tRNAs (with 1 or more amino acids incorporated), which drop off the ribosome during protein synthesis, or as a result of ribosome stalling. Catalyzes the release of premature peptidyl moieties from peptidyl-tRNA molecules trapped in stalled 50S ribosomal subunits, and thus maintains levels of free tRNAs and 50S ribosomes. The protein is Peptidyl-tRNA hydrolase of Mycoplasma capricolum subsp. capricolum (strain California kid / ATCC 27343 / NCTC 10154).